A 376-amino-acid polypeptide reads, in one-letter code: Salivary hyaluronidase (376 aa).

The first 16 residues, 1–16 (MNWIFHLFCAVYGIFC), serve as a signal peptide directing secretion. Intrachain disulfides connect Cys-32-Cys-328 and Cys-203-Cys-217. Asn-36, Asn-55, Asn-77, and Asn-88 each carry an N-linked (GlcNAc...) asparagine glycan. Glu-118 acts as the Proton donor in catalysis. Residues Asn-143, Asn-153, Asn-181, Asn-214, Asn-226, Asn-248, Asn-287, Asn-321, Asn-336, Asn-356, and Asn-371 are each glycosylated (N-linked (GlcNAc...) asparagine).

The protein belongs to the glycosyl hydrolase 56 family. In terms of processing, glycosylated; glycosylation is critical for enzymatic activity. In terms of tissue distribution, female salivary gland (at protein level).

It localises to the secreted. The catalysed reaction is Random hydrolysis of (1-&gt;4)-linkages between N-acetyl-beta-D-glucosamine and D-glucuronate residues in hyaluronate.. In terms of biological role, hydrolyzes high molecular weight hyaluronic acid to produce small oligosaccharides. Up-regulates expression of CSF2, CSF3, LIF, CXCL1, CXCL2 and CXCL8 in cultured human dermal microvascular endothelial cells. Promotes host neutrophil recruitment at the injection site. Functionally, (Microbial infection) Probably promotes Leishmania major infection in the host. This is Salivary hyaluronidase from Lutzomyia longipalpis (Sand fly).